The chain runs to 107 residues: MDQFATISMEQARERWRQGEAVLVDIRDPQSFAAGHLRGAFHLTNDTLPAFLAQHDLARPVMVLCYHGNSSKGAAQYLLTQGVEVAYSVDGGFDAWLKAFPLETESL.

The Rhodanese domain maps to 17–105 (RQGEAVLVDI…WLKAFPLETE (89 aa)). The active-site Cysteine persulfide intermediate is cysteine 65.

This sequence belongs to the GlpE family.

It localises to the cytoplasm. It carries out the reaction thiosulfate + hydrogen cyanide = thiocyanate + sulfite + 2 H(+). It catalyses the reaction thiosulfate + [thioredoxin]-dithiol = [thioredoxin]-disulfide + hydrogen sulfide + sulfite + 2 H(+). In terms of biological role, transferase that catalyzes the transfer of sulfur from thiosulfate to thiophilic acceptors such as cyanide or dithiols. May function in a CysM-independent thiosulfate assimilation pathway by catalyzing the conversion of thiosulfate to sulfite, which can then be used for L-cysteine biosynthesis. The sequence is that of Thiosulfate sulfurtransferase GlpE from Sodalis glossinidius (strain morsitans).